Reading from the N-terminus, the 154-residue chain is 3-dehydroquinate dehydratase (154 aa).

The active-site Proton acceptor is Tyr-23. Substrate contacts are provided by Asn-75, His-81, and Asp-88. His-101 acts as the Proton donor in catalysis. Residues 102 to 103 and Arg-112 each bind substrate; that span reads LS.

Belongs to the type-II 3-dehydroquinase family. As to quaternary structure, homododecamer.

It catalyses the reaction 3-dehydroquinate = 3-dehydroshikimate + H2O. The protein operates within metabolic intermediate biosynthesis; chorismate biosynthesis; chorismate from D-erythrose 4-phosphate and phosphoenolpyruvate: step 3/7. Catalyzes a trans-dehydration via an enolate intermediate. This is 3-dehydroquinate dehydratase from Teredinibacter turnerae (strain ATCC 39867 / T7901).